Consider the following 233-residue polypeptide: Large ribosomal subunit protein uL1 (233 aa).

The protein belongs to the universal ribosomal protein uL1 family. In terms of assembly, part of the 50S ribosomal subunit.

In terms of biological role, binds directly to 23S rRNA. The L1 stalk is quite mobile in the ribosome, and is involved in E site tRNA release. Protein L1 is also a translational repressor protein, it controls the translation of the L11 operon by binding to its mRNA. The protein is Large ribosomal subunit protein uL1 of Aeromonas salmonicida (strain A449).